The sequence spans 55 residues: Large ribosomal subunit protein bL33 (55 aa).

The segment covering 1-10 (MAKGGREKIK) has biased composition (basic and acidic residues). The interval 1–27 (MAKGGREKIKLQSTAGTGHFYTTDKNK) is disordered.

It belongs to the bacterial ribosomal protein bL33 family.

The sequence is that of Large ribosomal subunit protein bL33 from Polaromonas naphthalenivorans (strain CJ2).